We begin with the raw amino-acid sequence, 112 residues long: UPF0122 protein CPF_1968 (112 aa).

Belongs to the UPF0122 family.

Functionally, might take part in the signal recognition particle (SRP) pathway. This is inferred from the conservation of its genetic proximity to ftsY/ffh. May be a regulatory protein. In Clostridium perfringens (strain ATCC 13124 / DSM 756 / JCM 1290 / NCIMB 6125 / NCTC 8237 / Type A), this protein is UPF0122 protein CPF_1968.